Reading from the N-terminus, the 530-residue chain is Histone-arginine methyltransferase CARMER (530 aa).

The SAM-dependent MTase PRMT-type domain occupies 141 to 450 (ASQYFQFYGY…QSYDVTIDLH (310 aa)). Q154, R163, G187, E209, E238, and T266 together coordinate S-adenosyl-L-methionine. Position 501 is an asymmetric dimethylarginine; by autocatalysis (R501).

The protein belongs to the class I-like SAM-binding methyltransferase superfamily. Protein arginine N-methyltransferase family. Homodimer. Post-translationally, the dimethylated protein is the major form.

Its subcellular location is the cytoplasm. It is found in the nucleus. It carries out the reaction L-arginyl-[protein] + 2 S-adenosyl-L-methionine = N(omega),N(omega)-dimethyl-L-arginyl-[protein] + 2 S-adenosyl-L-homocysteine + 2 H(+). Functionally, methylates (mono- and asymmetric dimethylation) the guanidino nitrogens of arginyl residues in proteins. May methylate histone H3 at 'Arg-17' and activate transcription via chromatin remodeling. The protein is Histone-arginine methyltransferase CARMER (Art4) of Drosophila yakuba (Fruit fly).